We begin with the raw amino-acid sequence, 608 residues long: Albumin 2 (608 aa).

Positions 1–14 (MQWLSVCSLLVLLS) are cleaved as a signal peptide. The propeptide occupies 15-18 (VLSR). Albumin domains lie at 19–205 (SQAQ…TFQH), 206–398 (AIAK…AGSD), and 402–600 (KITD…KLVS). Disulfide bonds link C26-C72, C71-C80, C93-C108, C107-C118, C142-C187, C186-C195, C218-C264, C263-C271, C283-C299, C298-C309, C336-C381, C380-C389, C414-C460, C459-C471, C484-C500, C499-C510, C537-C582, and C581-C590. N-linked (GlcNAc...) asparagine glycosylation is present at N501.

It belongs to the ALB/AFP/VDB family. As to expression, plasma.

It is found in the secreted. Its function is as follows. Binds water, Ca(2+), Na(+), K(+), fatty acids, hormones, bilirubin and drugs. Its main function is the regulation of the colloidal osmotic pressure of blood. The protein is Albumin 2 (alb2) of Salmo salar (Atlantic salmon).